Consider the following 198-residue polypeptide: MAALTAEHFVALQSLLKASSKDVVRQLCQESFSSSCLDSESLLDKTCSSLSVPQGEAAQLLQALHHFTRLVAFRDLSSAEAILALFPENFHQNLKNLLTKIIVEHISTWRAEAQANQISLPRLVDLDWRVDIKTSSDNISRMAVPTCLLQMKIQEDPSLCGEKPSISAVTMELSKETLDTMLDGLGRIRDQLSAVANK.

Ala2 is subject to N-acetylalanine. The region spanning 122–196 is the COMM domain; it reads RLVDLDWRVD…RIRDQLSAVA (75 aa).

The protein belongs to the COMM domain-containing protein 9 family. As to quaternary structure, component of the commander complex consisting of the CCC subcomplex and the retriever subcomplex. Component of the CCC (COMMD/CCDC22/CCDC93) subcomplex consisting of COMMD1, COMMD2, COMMD3, COMMD4, COMMD5, COMMD6, COMMD7, COMMD8, COMMD9, COMMD10, CCDC22 and CCDC93; within the complex forms a heterodimer with COMMD7. Interacts with RELB and NFKB1/p105. Interacts with CCDC22, CCDC93, SCNN1B, CUL1.

It is found in the nucleus. The protein localises to the cytoplasmic vesicle. In terms of biological role, scaffold protein in the commander complex that is essential for endosomal recycling of transmembrane cargos; the commander complex is composed of the CCC subcomplex and the retriever subcomplex. May modulate activity of cullin-RING E3 ubiquitin ligase (CRL) complexes. May down-regulate activation of NF-kappa-B. Modulates Na(+) transport in epithelial cells by regulation of apical cell surface expression of amiloride-sensitive sodium channel (ENaC) subunits. The polypeptide is COMM domain-containing protein 9 (Commd9) (Mus musculus (Mouse)).